A 201-amino-acid chain; its full sequence is Ribonuclease HII (201 aa).

Residues 12-201 form the RNase H type-2 domain; sequence DLVAGVDEVG…VRELLDVSVQ (190 aa). D18, E19, and D110 together coordinate a divalent metal cation.

It belongs to the RNase HII family. Mn(2+) is required as a cofactor. The cofactor is Mg(2+).

The protein resides in the cytoplasm. The enzyme catalyses Endonucleolytic cleavage to 5'-phosphomonoester.. In terms of biological role, endonuclease that specifically degrades the RNA of RNA-DNA hybrids. This is Ribonuclease HII from Pseudomonas aeruginosa (strain ATCC 15692 / DSM 22644 / CIP 104116 / JCM 14847 / LMG 12228 / 1C / PRS 101 / PAO1).